Here is a 224-residue protein sequence, read N- to C-terminus: ATP-dependent dethiobiotin synthetase BioD (224 aa).

Threonine 18 provides a ligand contact to Mg(2+). The active site involves lysine 39. Serine 43 is a binding site for substrate. The Mg(2+) site is built by aspartate 56 and glutamate 117. ATP is bound by residues aspartate 56, 117–120, and 177–178; these read EGVG and NE.

It belongs to the dethiobiotin synthetase family. In terms of assembly, homodimer. It depends on Mg(2+) as a cofactor.

Its subcellular location is the cytoplasm. It carries out the reaction (7R,8S)-7,8-diammoniononanoate + CO2 + ATP = (4R,5S)-dethiobiotin + ADP + phosphate + 3 H(+). Its pathway is cofactor biosynthesis; biotin biosynthesis; biotin from 7,8-diaminononanoate: step 1/2. In terms of biological role, catalyzes a mechanistically unusual reaction, the ATP-dependent insertion of CO2 between the N7 and N8 nitrogen atoms of 7,8-diaminopelargonic acid (DAPA, also called 7,8-diammoniononanoate) to form a ureido ring. This is ATP-dependent dethiobiotin synthetase BioD from Xanthomonas oryzae pv. oryzae (strain MAFF 311018).